Here is a 102-residue protein sequence, read N- to C-terminus: Small ribosomal subunit protein uS10 (102 aa).

This sequence belongs to the universal ribosomal protein uS10 family. In terms of assembly, part of the 30S ribosomal subunit.

Functionally, involved in the binding of tRNA to the ribosomes. This chain is Small ribosomal subunit protein uS10, found in Geobacillus kaustophilus (strain HTA426).